We begin with the raw amino-acid sequence, 557 residues long: Polypyrimidine tract-binding protein 1 (557 aa).

Met-1 bears the N-acetylmethionine mark. Residue Ser-16 is modified to Phosphoserine. RRM domains are found at residues 59 to 143 (RVIH…SSPN), 184 to 260 (LRII…FSKL), and 363 to 437 (SVLL…LSKH). Lys-65 participates in a covalent cross-link: Glycyl lysine isopeptide (Lys-Gly) (interchain with G-Cter in SUMO2). Position 127 is a phosphotyrosine (Tyr-127). Thr-138 carries the post-translational modification Phosphothreonine. Ser-141 bears the Phosphoserine mark. Lys-218 is covalently cross-linked (Glycyl lysine isopeptide (Lys-Gly) (interchain with G-Cter in SUMO2)). Residues 437-460 (HQSVQLPREGQEDQGLTKDYGNSP) form a disordered region. Ser-459 carries the post-translational modification Phosphoserine. The RRM 4 domain maps to 480–555 (ATLHLSNIPP…HHLRVSFSKS (76 aa)).

In terms of assembly, monomer. Part of a ternary complex containing KHSRP, PTBP1, PTBP2 and HNRPH1. Interacts with RAVER1 and SFPQ.

Its subcellular location is the nucleus. Its function is as follows. Plays a role in pre-mRNA splicing and in the regulation of alternative splicing events. Activates exon skipping of its own pre-mRNA during muscle cell differentiation. Binds to the polypyrimidine tract of introns. May promote RNA looping when bound to two separate polypyrimidine tracts in the same pre-mRNA. May promote the binding of U2 snRNP to pre-mRNA. Cooperates with RAVER1 to modulate switching between mutually exclusive exons during maturation of the TPM1 pre-mRNA. Represses the splicing of MAPT/Tau exon 10. Binds to polypyrimidine-rich controlling element (PCE) of CFTR and promotes exon skipping of CFTR exon 9, thereby antagonizing TIA1 and its role in exon inclusion of CFTR exon 9. Plays a role in the splicing of pyruvate kinase PKM by binding repressively to a polypyrimidine tract flanking PKM exon 9, inhibiting exon 9 inclusion and resulting in exon 10 inclusion and production of the PKM M2 isoform. The sequence is that of Polypyrimidine tract-binding protein 1 (PTBP1) from Bos taurus (Bovine).